Reading from the N-terminus, the 323-residue chain is Serine/threonine-protein phosphatase PP1-gamma catalytic subunit (323 aa).

Ala2 is modified (N-acetylalanine). Mn(2+)-binding residues include Asp64, His66, Asp92, and Asn124. The active-site Proton donor is the His125. Residues His173 and His248 each contribute to the Mn(2+) site. A phosphothreonine mark is found at Thr307 and Thr311.

This sequence belongs to the PPP phosphatase family. PP-1 subfamily. PP1 comprises a catalytic subunit, PPP1CA, PPP1CB or PPP1CC, which is folded into its native form by inhibitor 2 and glycogen synthetase kinase 3, and then complexed to one or several targeting or regulatory subunits. PPP1R12A, PPP1R12B and PPP1R12C mediate binding to myosin. PPP1R3A (in skeletal muscle), PPP1R3B (in liver), PPP1R3C, PPP1R3D and PPP1R3F (in brain) mediate binding to glycogen. PPP1R15A and PPP1R15B mediate binding to EIF2S1. Part of a complex containing PPP1R15B, PP1 and NCK1/2. Interacts with PPP1R3B, PPP1R7 and CDCA2. Interacts with IKFZ1; the interaction targets PPP1CC to pericentromeric heterochromatin, dephosphorylates IKAROS, stabilizes it and prevents it from degradation. Interacts with NOM1 and PPP1R8. Component of the PTW/PP1 phosphatase complex, composed of PPP1R10/PNUTS, TOX4, WDR82, and PPP1CA or PPP1CB or PPP1CC. Interacts with PPP1R8. Interacts with NEK2. Interacts with PPP1R42; the interaction is direct. Interacts with URI1; the interaction is phosphorylation-dependent and occurs in a growth factor-dependent manner. Interacts with FOXP3. Interacts with TMEM225 (via RVxF motif). Interacts with MKI67. Interacts with RRP1B; this targets PPP1CC to the nucleolus. Interacts with DYNLT4. Interacts (via RVxF motif) with FIRRM; regulates PLK1 kinase activity. Interacts with the KNL1 complex subunit KNL1; the interaction is direct and mutually exclusive with KNL1 binding to microtubules. Component of the SHOC2-MRAS-PP1c (SMP) complex consisting of SHOC2, GTP-bound M-Ras/MRAS and the catalytic subunit of protein phosphatase 1 (either PPP1CA, PPP1CB or PPP1CC). SHOC2 and PP1c preferably bind M-Ras/MRAS, but they also bind K-Ras/KRAS, N-Ras/NRAS and H-Ras/HRAS; these interactions are GTP-dependent and both SHOC2 and PP1c are required to form a stable complex. Interacts with SHOC2 in the absence of Ras GTPases. Mn(2+) serves as cofactor. In terms of processing, phosphorylated by NEK2.

The protein localises to the cytoplasm. The protein resides in the nucleus. It is found in the cleavage furrow. Its subcellular location is the nucleolus. It localises to the nucleoplasm. The protein localises to the chromosome. The protein resides in the centromere. It is found in the kinetochore. Its subcellular location is the nucleus speckle. It localises to the midbody. The protein localises to the mitochondrion. The protein resides in the cytoskeleton. It is found in the microtubule organizing center. The catalysed reaction is O-phospho-L-seryl-[protein] + H2O = L-seryl-[protein] + phosphate. It catalyses the reaction O-phospho-L-threonyl-[protein] + H2O = L-threonyl-[protein] + phosphate. Inactivated by binding to URI1. Functionally, protein phosphatase that associates with over 200 regulatory proteins to form highly specific holoenzymes which dephosphorylate hundreds of biological targets. Protein phosphatase 1 (PP1) is essential for cell division, and participates in the regulation of glycogen metabolism, muscle contractility and protein synthesis. Dephosphorylates RPS6KB1. Involved in regulation of ionic conductances and long-term synaptic plasticity. May play an important role in dephosphorylating substrates such as the postsynaptic density-associated Ca(2+)/calmodulin dependent protein kinase II. Component of the PTW/PP1 phosphatase complex, which plays a role in the control of chromatin structure and cell cycle progression during the transition from mitosis into interphase. Regulates the recruitment of the SKA complex to kinetochores. Core component of the SHOC2-MRAS-PP1c (SMP) holophosphatase complex that regulates the MAPK pathway activation. Dephosphorylates MKI67 at the onset of anaphase. The SMP complex specifically dephosphorylates the inhibitory phosphorylation at 'Ser-259' of RAF1 kinase, 'Ser-365' of BRAF kinase and 'Ser-214' of ARAF kinase, stimulating their kinase activities. The SMP complex enhances the dephosphorylation activity and substrate specificity of PP1c. This chain is Serine/threonine-protein phosphatase PP1-gamma catalytic subunit (PPP1CC), found in Canis lupus familiaris (Dog).